We begin with the raw amino-acid sequence, 91 residues long: MDLEGKCCLIHAIGGIIFGYLANYVYTAGLGIFSGIATLIFLFIGAVIFGHISAKTFGEESLTQKQWLGCGVLPFFLVAIVVWVLKFNGLI.

3 helical membrane passes run 9–29 (LIHAIGGIIFGYLANYVYTAG), 30–50 (LGIFSGIATLIFLFIGAVIFG), and 67–87 (WLGCGVLPFFLVAIVVWVLKF).

The protein resides in the cell membrane. This is an uncharacterized protein from Methanocaldococcus jannaschii (strain ATCC 43067 / DSM 2661 / JAL-1 / JCM 10045 / NBRC 100440) (Methanococcus jannaschii).